The sequence spans 201 residues: UPF0177 protein YajF (201 aa).

A run of 5 helical transmembrane segments spans residues Thr-10 to Tyr-30, Ile-44 to Ile-64, Ile-82 to Ile-102, Val-119 to Leu-139, and Phe-159 to Ile-179.

Belongs to the UPF0177 family.

The protein resides in the cell membrane. This chain is UPF0177 protein YajF (yajF), found in Lactococcus lactis subsp. lactis (strain IL1403) (Streptococcus lactis).